Reading from the N-terminus, the 375-residue chain is D-apiose dehydrogenase (375 aa).

29–30 contacts NAD(+); the sequence is FF. 4 residues coordinate Mg(2+): Trp38, Arg39, Ile41, and Ala44. NAD(+) is bound by residues Asp51, Ser93, 111–112, Asn140, and 179–181; these read QK and QPY. Lys112 serves as a coordination point for substrate. Residues Gln179, Asp192, His196, and Tyr246 each contribute to the substrate site.

Belongs to the Gfo/Idh/MocA family.

The enzyme catalyses D-apiofuranose + NAD(+) = D-apionolactone + NADH + H(+). The protein operates within carbohydrate metabolism. Functionally, involved in catabolism of D-apiose. Catalyzes oxidation of D-apiose to D-apionolactone. The chain is D-apiose dehydrogenase from Paraburkholderia graminis (strain ATCC 700544 / DSM 17151 / LMG 18924 / NCIMB 13744 / C4D1M).